Reading from the N-terminus, the 739-residue chain is Ent-kaurene synthase-like 3 (739 aa).

Asp-475, Asp-479, Asn-619, Thr-623, and Glu-627 together coordinate Mg(2+). The short motif at 475 to 479 (DDFFD) is the DDXXD motif element.

The protein belongs to the terpene synthase family. It depends on Mg(2+) as a cofactor. As to expression, expressed in roots and stems.

The protein is Ent-kaurene synthase-like 3 (KSL3) of Oryza sativa subsp. japonica (Rice).